The chain runs to 217 residues: MATLTPRQQQIFDLIRNTIRRTGFPPTRAEIAAEFGFSSPNAAEEHLRALARKGVIELTPGASRGIRLKVSRSDSELPDQFSLPMAGVLQLTLPLVGRVAAGSPILAAEHIDRQYQVDASVFDERPDYLLRVRGLSMRDAGILDGDLLAVRRASEAANGKIVVARLGDDVTVKRLQRRGGHIELIAENPDFTNIIVEPGEEFSLEGIAVGLIRSSGF.

The segment at residues 28 to 48 (RAEIAAEFGFSSPNAAEEHLR) is a DNA-binding region (H-T-H motif). Residues serine 136 and lysine 173 each act as for autocatalytic cleavage activity in the active site.

Belongs to the peptidase S24 family. Homodimer.

The catalysed reaction is Hydrolysis of Ala-|-Gly bond in repressor LexA.. Functionally, represses a number of genes involved in the response to DNA damage (SOS response), including recA and lexA. In the presence of single-stranded DNA, RecA interacts with LexA causing an autocatalytic cleavage which disrupts the DNA-binding part of LexA, leading to derepression of the SOS regulon and eventually DNA repair. This is LexA repressor from Cupriavidus taiwanensis (strain DSM 17343 / BCRC 17206 / CCUG 44338 / CIP 107171 / LMG 19424 / R1) (Ralstonia taiwanensis (strain LMG 19424)).